Reading from the N-terminus, the 395-residue chain is Elongation factor Tu (395 aa).

The 195-residue stretch at K10–E204 folds into the tr-type G domain. The interval G19–T26 is G1. Position 19 to 26 (G19 to T26) interacts with GTP. T26 contributes to the Mg(2+) binding site. The tract at residues G60–S64 is G2. The segment at D81 to G84 is G3. GTP contacts are provided by residues D81 to H85 and N136 to D139. The G4 stretch occupies residues N136–D139. The G5 stretch occupies residues S174–L176.

It belongs to the TRAFAC class translation factor GTPase superfamily. Classic translation factor GTPase family. EF-Tu/EF-1A subfamily. Monomer.

It localises to the cytoplasm. It catalyses the reaction GTP + H2O = GDP + phosphate + H(+). Functionally, GTP hydrolase that promotes the GTP-dependent binding of aminoacyl-tRNA to the A-site of ribosomes during protein biosynthesis. This is Elongation factor Tu from Listeria monocytogenes serotype 4b (strain CLIP80459).